Reading from the N-terminus, the 66-residue chain is LYR motif-containing protein PHYPADRAFT_186863 (66 aa).

Belongs to the complex I LYR family. LYRM9 subfamily.

The polypeptide is LYR motif-containing protein PHYPADRAFT_186863 (Physcomitrium patens (Spreading-leaved earth moss)).